Here is a 1596-residue protein sequence, read N- to C-terminus: SET-binding protein (1596 aa).

The segment covering 1-12 (MESRETLSSSRQ) has biased composition (polar residues). 3 disordered regions span residues 1 to 83 (MESR…WVAG), 134 to 426 (KQSG…SIKA), and 475 to 518 (SPSV…SRKL). The segment covering 64–81 (GSGRDVDSNSNADSEKWV) has biased composition (basic and acidic residues). A compositionally biased stretch (low complexity) spans 164 to 175 (LTASDLAASDLK). Polar residues-rich tracts occupy residues 213-236 (KSSS…QNCF) and 270-282 (AGNT…NNNK). Positions 290–306 (APSPSSHSSPAPPSSSA) are enriched in low complexity. Over residues 363 to 372 (DNTEGKREGY) the composition is skewed to basic and acidic residues. Over residues 375–395 (DSAQEASPARQNVSSASNPEN) the composition is skewed to polar residues. A DNA-binding region (a.T hook 1) is located at residues 584–596 (KKKRGRPKKQPLL). Disordered regions lie at residues 604–624 (GTST…KKRK), 722–763 (YIGK…AVPS), and 777–796 (HPLS…ASTE). Over residues 779-796 (LSTQLGGSNGNLSPASTE) the composition is skewed to polar residues. An N6-acetyllysine modification is found at Lys817. The span at 854–880 (SPVSESHSEETIPSDSGIGTDNNSTSD) shows a compositional bias: polar residues. The disordered stretch occupies residues 854–889 (SPVSESHSEETIPSDSGIGTDNNSTSDQAEKSSESR). Residues 1016–1028 (KKKRGRPAKTNDT) constitute a DNA-binding region (a.T hook 2). 6 disordered regions span residues 1134–1164 (PPKV…DRIL), 1202–1225 (EKNK…SKNN), 1245–1300 (AKEK…GSKR), 1325–1344 (SSYD…KVDQ), 1440–1473 (QRQS…DQMP), and 1518–1596 (EAPP…EVLP). Basic residues predominate over residues 1146 to 1159 (RLHKRKHKHKHKHK). Residues 1450–1459 (VKKRRGRPRK) are compositionally biased toward basic residues. The segment at residues 1451–1463 (KKRRGRPRKQPTQ) is a DNA-binding region (a.T hook 3). Tandem repeats lie at residues 1520–1527 (PPLPPPPP), 1528–1535 (PPLPPPPP), and 1536–1543 (PPLPPPPP). The interval 1520-1543 (PPLPPPPPPPLPPPPPPPLPPPPP) is 3 X 8 AA tandem repeats of P-P-L-P-P-P-P-P. Pro residues-rich tracts occupy residues 1520–1546 (PPLP…PLPK) and 1560–1572 (PAQP…PQQP).

Interacts with SET. Expressed in numerous tissues. Expressed at low levels in myeloid and monocytic cells as well as in CD34+ cells; expression levels are higher in myeloid malignancies.

It is found in the nucleus. This chain is SET-binding protein (SETBP1), found in Homo sapiens (Human).